Reading from the N-terminus, the 426-residue chain is Glutamate-1-semialdehyde 2,1-aminomutase (426 aa).

Residue lysine 265 is modified to N6-(pyridoxal phosphate)lysine.

Belongs to the class-III pyridoxal-phosphate-dependent aminotransferase family. HemL subfamily. Homodimer. The cofactor is pyridoxal 5'-phosphate.

The protein resides in the cytoplasm. It carries out the reaction (S)-4-amino-5-oxopentanoate = 5-aminolevulinate. Its pathway is porphyrin-containing compound metabolism; protoporphyrin-IX biosynthesis; 5-aminolevulinate from L-glutamyl-tRNA(Glu): step 2/2. This chain is Glutamate-1-semialdehyde 2,1-aminomutase, found in Cellvibrio japonicus (strain Ueda107) (Pseudomonas fluorescens subsp. cellulosa).